We begin with the raw amino-acid sequence, 83 residues long: Small ribosomal subunit protein bS16 (83 aa).

It belongs to the bacterial ribosomal protein bS16 family.

The sequence is that of Small ribosomal subunit protein bS16 from Pseudoalteromonas atlantica (strain T6c / ATCC BAA-1087).